We begin with the raw amino-acid sequence, 7192 residues long: Nonribosomal peptide synthetase gloA (7192 aa).

Polar residues predominate over residues 1–48 (MTPSRSLENGEKQMNWNESPQTASPKNVLRDSNSNGNYVNGHGTNING). The disordered stretch occupies residues 1 to 52 (MTPSRSLENGEKQMNWNESPQTASPKNVLRDSNSNGNYVNGHGTNINGDGSD). A Carrier 1 domain is found at 105-181 (HSTSKFKEEF…GLFATANFRP (77 aa)). O-(pantetheine 4'-phosphoryl)serine is present on serine 142. The tract at residues 239–634 (EDVYPCTPLQ…TYTVQCLCNP (396 aa)) is condensation 1. The segment at 675-1047 (QDQVNIQPAK…SLMYLGRCDS (373 aa)) is adenylation 1. Residues 1190–1266 (APSTDAEKQV…DLAFVIQRRL (77 aa)) enclose the Carrier 2 domain. Serine 1227 is modified (O-(pantetheine 4'-phosphoryl)serine). The interval 1316–1736 (EDIYPCTPLQ…MSWLSDYDEE (421 aa)) is condensation 2. Residues 1758 to 2154 (QEQTKLRPNA…GRRDTQIKIR (397 aa)) form an adenylation 2 region. The Carrier 3 domain maps to 2288–2364 (APSTREECLV…ELAELLAKRS (77 aa)). Serine 2325 carries the post-translational modification O-(pantetheine 4'-phosphoryl)serine. The condensation 3 stretch occupies residues 2407–2829 (VEDVYPCTPL…LIAPEDQEQI (423 aa)). Positions 2849 to 3245 (YKQVMARPQA…GRRDDQIKIR (397 aa)) are adenylation 3. A Carrier 4 domain is found at 3378-3455 (TPSTKMEKVI…DLASVMTEHR (78 aa)). Serine 3415 is modified (O-(pantetheine 4'-phosphoryl)serine). The interval 3502–3891 (EDIYPCTALQ…NGVLDQFVYI (390 aa)) is condensation 4. An adenylation 4 region spans residues 3920-4320 (QEQALARPTA…ARRDMQVKIR (401 aa)). The region spanning 4453 to 4529 (LPSTQVELQL…ELAVILDGRK (77 aa)) is the Carrier 5 domain. At serine 4490 the chain carries O-(pantetheine 4'-phosphoryl)serine. The tract at residues 4574–4971 (EDIYPCTPLQ…QFEYVVQKFH (398 aa)) is condensation 5. An adenylation 5 region spans residues 5013 to 5414 (DDHVAARPMA…GRQDLQVKIR (402 aa)). The 77-residue stretch at 5551–5627 (APDTDLGRLI…DLVNTLSNRS (77 aa)) folds into the Carrier 6 domain. Residue serine 5588 is modified to O-(pantetheine 4'-phosphoryl)serine. The interval 5674–6071 (EDVYPSTPLQ…CVVQRILTQS (398 aa)) is condensation 6. Positions 6111–6507 (QAQVKKSPAA…GRRDLQVKIR (397 aa)) are adenylation 6. The region spanning 6645-6721 (NPSTTMERQL…DLAVVLTDRL (77 aa)) is the Carrier 7 domain. Residue serine 6682 is modified to O-(pantetheine 4'-phosphoryl)serine. The interval 6795–7178 (NGPCDTRALK…NPLSPVKQVL (384 aa)) is condensation 7.

Belongs to the NRP synthetase family.

Its pathway is mycotoxin biosynthesis. Its function is as follows. Nonribosomal peptide synthetase; part of the gene cluster that mediates the biosynthesis of pneumocandins, lipohexapeptides of the echinocandin family that prevent fungal cell wall formation by non-competitive inhibition of beta-1,3-glucan synthase. The 10,12-dimethylmyristoyl side chain is synthesized by the reducing polyketide synthase gloL/GLPKS4. The thioesterase gloN/GLHYD exclusively interacts with gloL/GLPKS4 to maintain turnover of the polyketide side chain. The 10R,12S-dimethylmyristic acid is then transferred to the first thiolation domain of the nonribosomal peptide synthetase gloA/GLNRPS4 by the acyl-AMP ligase gloD/GLligase, followed by its acylation to L-ornithine to trigger elongation of the cyclic hexapeptide. L-ornithine, 4R-hydroxyl-L-proline (generated from L-proline by the dioxygenase gloF/GLOXY2), 3S-hydroxyl-L-homotyrosine (generated by gloG/GLHtyB, gloH/GLHtyA, gloI/GLHtyC, gloJ/GLHtyD and hydroxylated at C-3 by the dioxygenase gloM/GLOXY1), 3R-hydroxyl-L-glutamine (generated from L-glutamine probably by the dioxygenase gloE/GLOXY3) and 3S-hydroxyl-L-proline (generated from L-proline by the dioxygenase gloF/GLOXY2 to yield pneumocandin B0), or 3S-hydroxyl-4S-methyl-L-proline (generated from L-leucine by the dioxygenase gloC/GLOXY4 to yield pneumocandin A0) are sequentially added to the growing chain. The last C domain of gloA/GLNRPS4 is proposed to be responsible for cyclization by condensation to form the peptide bond between L-ornithine and 3S-hydroxyl-4S-methyl-L-proline (for pneumocandin A0) or 3S-hydroxyl-L-proline (for pneumocandin B0). Finally, the subsequent C-4 hydroxylation of 3S-hydroxyl-L-homotyrosine and L-ornithine dihydroxylation at C-4 and C-5 are performed by the cytochrome P450 monooxygenases gloP/GLP450-1 and gloO/GLP450-2, respectively. The chain is Nonribosomal peptide synthetase gloA from Glarea lozoyensis (strain ATCC 20868 / MF5171).